Reading from the N-terminus, the 78-residue chain is Large ribosomal subunit protein bL28 (78 aa).

The protein belongs to the bacterial ribosomal protein bL28 family.

The sequence is that of Large ribosomal subunit protein bL28 from Hydrogenovibrio crunogenus (strain DSM 25203 / XCL-2) (Thiomicrospira crunogena).